A 434-amino-acid chain; its full sequence is MAQFYSAKRRVTTRQIITVTVNDLDPFGQGVARHQGKALFVSGVLPHEQAEVVLVEDKKQYARAEVKRRLTDSPQRQAPRCPHFGVCGGCQQQHASVPLQQQSKRAALGRLMKREVDDVIAGAPWGYRRRARLSLNYQPKTQQLQMGFRQANAKAIVDVVQCPVLVPQLEALLPAVRECLSALSALRHLGHVELVQADNGPLMVLRHTAALPATDREKLERFSQTHGLSLYLAPQSEILEHIHGEAPWYTSDGLRLVFSPRDFIQVNDGVNQQMVRTALEWLDLRPEDRVLDLFCGMGNFTLPLATRAAHVVGVEGVPALVEKGRENAARNGLSNVTFFHENLEEDVTRQAWAKHGFDKVLLDPARAGAPGVMPHIIKLAPRRVVYVSCNPATLARDSETLLQAGYQIQRLAMLDMFPHTGHLESMVLFERRLT.

Residues 10-68 (RVTTRQIITVTVNDLDPFGQGVARHQGKALFVSGVLPHEQAEVVLVEDKKQYARAEVKR) enclose the TRAM domain. [4Fe-4S] cluster-binding residues include Cys81, Cys87, Cys90, and Cys162. Gln265, Phe294, Asn299, Glu315, Asn342, and Asp363 together coordinate S-adenosyl-L-methionine. The active-site Nucleophile is Cys389.

It belongs to the class I-like SAM-binding methyltransferase superfamily. RNA M5U methyltransferase family. RlmD subfamily.

It catalyses the reaction uridine(1939) in 23S rRNA + S-adenosyl-L-methionine = 5-methyluridine(1939) in 23S rRNA + S-adenosyl-L-homocysteine + H(+). Functionally, catalyzes the formation of 5-methyl-uridine at position 1939 (m5U1939) in 23S rRNA. The polypeptide is 23S rRNA (uracil(1939)-C(5))-methyltransferase RlmD (Klebsiella pneumoniae subsp. pneumoniae (strain ATCC 700721 / MGH 78578)).